Reading from the N-terminus, the 306-residue chain is Glutaminase (306 aa).

Residues serine 61, asparagine 111, glutamate 155, asparagine 162, tyrosine 186, tyrosine 238, and valine 256 each contribute to the substrate site.

This sequence belongs to the glutaminase family. As to quaternary structure, homotetramer.

It carries out the reaction L-glutamine + H2O = L-glutamate + NH4(+). The polypeptide is Glutaminase (Pseudomonas entomophila (strain L48)).